We begin with the raw amino-acid sequence, 434 residues long: Tryptophan dimethylallyltransferase nptA (434 aa).

L-tryptophan is bound by residues 91–92 and E100; that span reads SL. Substrate contacts are provided by R115, K202, and Y204. Y206 lines the L-tryptophan pocket. Residues R271, K273, Y275, Y358, Y423, and Y427 each contribute to the substrate site.

The protein belongs to the tryptophan dimethylallyltransferase family. As to quaternary structure, homodimer.

It catalyses the reaction L-tryptophan + dimethylallyl diphosphate = 4-(3-methylbut-2-enyl)-L-tryptophan + diphosphate. It participates in secondary metabolite biosynthesis. Functionally, nonribosomal peptide synthase involved in the synthesis of nidulanin A and derived compounds. Nidulanin A is a tetracyclopeptide with the sequence L-Phe-L-Kyn-L-Val-D-Val and an isoprene unit N-linked to the amino group of L-kynurenine. The NRPS nlsA is responsible of the synthesis of the cyclopeptide and the prenyltransferase nptA adds the isoprene unit on the L-kynurenine residue of nidulanin A. Further modifications lead to additional oxygenated related compounds. This is Tryptophan dimethylallyltransferase nptA from Emericella nidulans (strain FGSC A4 / ATCC 38163 / CBS 112.46 / NRRL 194 / M139) (Aspergillus nidulans).